Here is a 174-residue protein sequence, read N- to C-terminus: NADH-ubiquinone oxidoreductase chain 6 (174 aa).

Helical transmembrane passes span 1-21, 24-44, 47-67, 86-106, and 151-171; these read MTYTLLLLSVILVVGFVGFSS, SPIYGGLVLVVSGVVGCAVIL, GGGYLGLMVFLIYLGGMMVVF, VEVLVGVLVGFVMEVALVLWA, and WLVVVTGWTLLVGVYIVIEIA.

It belongs to the complex I subunit 6 family. Core subunit of respiratory chain NADH dehydrogenase (Complex I) which is composed of 45 different subunits.

It is found in the mitochondrion inner membrane. The enzyme catalyses a ubiquinone + NADH + 5 H(+)(in) = a ubiquinol + NAD(+) + 4 H(+)(out). Functionally, core subunit of the mitochondrial membrane respiratory chain NADH dehydrogenase (Complex I) which catalyzes electron transfer from NADH through the respiratory chain, using ubiquinone as an electron acceptor. Essential for the catalytic activity and assembly of complex I. This Hylobates lar (Lar gibbon) protein is NADH-ubiquinone oxidoreductase chain 6 (MT-ND6).